The sequence spans 254 residues: Rho-related protein racD (254 aa).

Residue 15 to 22 (GDGAVGKT) coordinates GTP. The short motif at 37-45 (YVPTVFDNF) is the Effector region element. Residues 62–66 (DTAGQ) and 120–123 (TKTD) each bind GTP. Residues 186 to 231 (AVTSPTSKSSGKSSPSSTSSKPSKTTTTTTTSSSSSSPPAASTAKP) show a composition bias toward low complexity. The tract at residues 186-254 (AVTSPTSKSS…KDKDEKKPAK (69 aa)) is disordered. Basic and acidic residues predominate over residues 232–254 (AGEKKLSWGLFRKKDKDEKKPAK).

The protein belongs to the small GTPase superfamily. Rho family.

The polypeptide is Rho-related protein racD (racD) (Dictyostelium discoideum (Social amoeba)).